We begin with the raw amino-acid sequence, 58 residues long: U7-ctenitoxin-Pr1a (58 aa).

Intrachain disulfides connect C2–C16, C9–C22, C13–C48, C15–C40, C18–C55, and C24–C38.

As to expression, expressed by the venom gland.

It localises to the secreted. Probable neurotoxin. The chain is U7-ctenitoxin-Pr1a from Phoneutria reidyi (Brazilian Amazonian armed spider).